The following is a 279-amino-acid chain: Dehydrogenase/reductase SDR family member 4 (279 aa).

Residue 37-61 coordinates NADP(+); the sequence is LVTASTDGIGFAIARRLAQDGAHVV. Lys-93 carries the post-translational modification N6-acetyllysine; alternate. Lys-93 is subject to N6-succinyllysine; alternate. Lys-106 is modified (N6-acetyllysine). Ser-170 is a substrate binding site. The Proton acceptor role is filled by Tyr-183. Residue Lys-187 participates in NADP(+) binding. Ser-221 carries the post-translational modification Phosphoserine. Residue Lys-235 is modified to N6-succinyllysine. A Peroxisomal targeting signal motif is present at residues 277–279; it reads SHL.

It belongs to the short-chain dehydrogenases/reductases (SDR) family. Homotetramer.

The protein localises to the peroxisome. The catalysed reaction is a secondary alcohol + NADP(+) = a ketone + NADPH + H(+). It catalyses the reaction 3alpha-hydroxy-5beta-pregnan-20-one + NADP(+) = 5beta-pregnan-3,20-dione + NADPH + H(+). The enzyme catalyses 5beta-dihydrotestosterone + NADPH + H(+) = 5beta-androstane-3alpha,17beta-diol + NADP(+). It carries out the reaction all-trans-retinol + NADP(+) = all-trans-retinal + NADPH + H(+). The catalysed reaction is isatin + NADPH + H(+) = 3-hydroxyindolin-2-one + NADP(+). In terms of biological role, NADPH-dependent oxidoreductase which catalyzes the reduction of a variety of compounds bearing carbonyl groups including ketosteroids, alpha-dicarbonyl compounds, aldehydes, aromatic ketones and quinones. Reduces all-trans-retinal and 9-cis retinal. Reduces 3-ketosteroids and benzil into 3alpha-hydroxysteroids and S-benzoin, respectively, in contrast to the stereoselectivity of primates DHRS4s which produce 3beta-hydroxysteroids and R-benzoin. In the reverse reaction, catalyzes the NADP-dependent oxidation of 3alpha-hydroxysteroids and alcohol, but with much lower efficiency. Involved in the metabolism of 3alpha-hydroxysteroids, retinoid, isatin and xenobiotic carbonyl compounds. The protein is Dehydrogenase/reductase SDR family member 4 (DHRS4) of Bos taurus (Bovine).